The chain runs to 422 residues: Tyrosine--tRNA ligase (422 aa).

Tyr37 contributes to the L-tyrosine binding site. The 'HIGH' region signature appears at 42–51 (PTEESLHIGH). Residues Tyr175 and Gln179 each contribute to the L-tyrosine site. The 'KMSKS' region signature appears at 235–239 (KFGKT). Lys238 contacts ATP. The 58-residue stretch at 357–414 (KDLQEALVLTSLAQSRTQAKNMIISNSISINTEKIRKNHIFHEKDKLFGKFTLLSRGK) folds into the S4 RNA-binding domain.

It belongs to the class-I aminoacyl-tRNA synthetase family. TyrS type 1 subfamily. As to quaternary structure, homodimer.

It is found in the cytoplasm. The catalysed reaction is tRNA(Tyr) + L-tyrosine + ATP = L-tyrosyl-tRNA(Tyr) + AMP + diphosphate + H(+). In terms of biological role, catalyzes the attachment of tyrosine to tRNA(Tyr) in a two-step reaction: tyrosine is first activated by ATP to form Tyr-AMP and then transferred to the acceptor end of tRNA(Tyr). In Buchnera aphidicola subsp. Acyrthosiphon pisum (strain Tuc7), this protein is Tyrosine--tRNA ligase.